We begin with the raw amino-acid sequence, 351 residues long: Ceramide hydroxylase (351 aa).

4 consecutive transmembrane segments (helical) span residues 26 to 46 (AAIY…GFLI), 47 to 67 (AATT…MLAL), 141 to 161 (GFLF…AILI), and 204 to 224 (VACW…VVPV).

It belongs to the fatty acid desaturase type 1 family.

It localises to the cell inner membrane. It participates in lipid metabolism; sphingolipid metabolism. In terms of biological role, involved in de novo bacterial ceramide synthesis. This Caulobacter vibrioides (strain NA1000 / CB15N) (Caulobacter crescentus) protein is Ceramide hydroxylase.